Reading from the N-terminus, the 100-residue chain is MRTLTILTAVLLVALQAKAEPLQAEDEPLQAKAYEADAQEQRGANDQDFAVSFAEDASSSLRALGSTRAFTCHCRRSCYSTEYSYGTCTVMGINHRFCCL.

Residues 1 to 19 form the signal peptide; sequence MRTLTILTAVLLVALQAKA. The propeptide occupies 20 to 68; that stretch reads EPLQAEDEPLQAKAYEADAQEQRGANDQDFAVSFAEDASSSLRALGSTR. 3 cysteine pairs are disulfide-bonded: Cys-72/Cys-99, Cys-74/Cys-88, and Cys-78/Cys-98.

This sequence belongs to the alpha-defensin family. In terms of assembly, homodimer. Self-assembles into higher-order oligomers termed nanonets, fibril-like structures that entrap microbes. Self-assembly into nanonets seems to protect against proteolytic digestion in duodenal fluid. Interacts with Y.enterocolitica invasin and S.typhimurium fliC/flagellim; the interaction creates an anchoring site for progressive DEFA6 self-assembly into nanonets. Post-translationally, proteolytically cleaved by trypsin at Arg-68; the propeptide is stored in the tissue of the small intestine and the mature peptide is found in the luminal fluid; cleavage may occur during or after release into the lumen. The N-terminal propeptide region suppresses self-assembly and renders DEFA6 propeptide unable to agglutinate bacteria and protect human epithelial cells from bacterial invasion. In terms of processing, under reducing conditions, naturally present in the gut owing to the low redox potential or enzymatically generated by the thioredoxin system, the disulfide bridges are opened leading to a conformational change of DEF6, thereby changing its antimicrobial spectrum. The reduced form exhibits inhibitory activity against anaerobic bacteria, in contrast to the minimal antimicrobial activity of the disulfide-linked oxidized form. The formation of higher-order nanonets and bacterial entrapment is independent of the redox state.

Its subcellular location is the secreted. The protein resides in the cytoplasmic vesicle. It localises to the secretory vesicle. Its function is as follows. Host-defense peptide that contributes to intestinal innate immunity and mediates homeostasis at mucosal surfaces by forming higher-order oligomers that capture bacteria and prevent microbial invasion of the epithelium. After binding to bacterial surface proteins, undergoes ordered self-assembly to form fibril-like nanonets that surround and entangle bacteria and thereby prevent bacterial invasion across the epithelial barrier. Entangles and agglutinates Gram-negative bacteria, such as E.coli, S.typhimurium and Y.enterocolitica, and Gram-positive bacteria such as L.monocytogenes, thereby protecting the intestine against invasion by enteric bacterial pathogens. Blocks adhesion of C.albicans to intestinal epithelial cells and thereby suppresses fungal invasion of epithelial cells and biofilm formation. Under reducing conditions and in an acidic environment similar to the intestinal milieu, exhibits inhibitory activity against anaerobic bacteria such as B.adolescentis, L.acidophilus, and B.breve, as well as B.longum and S.thermophilus, possibly by leading to alterations in bacterial cell envelope structures. The disulfide-linked oxidized form exhibits negligible antimicrobial activity against Gram-negative and Gram-positive bacteria, as compared to the enteric defensin DEFA5. The polypeptide is Defensin-6 (DEFA6) (Pan troglodytes (Chimpanzee)).